We begin with the raw amino-acid sequence, 265 residues long: Thiazole synthase (265 aa).

The Schiff-base intermediate with DXP role is filled by Lys106. 1-deoxy-D-xylulose 5-phosphate contacts are provided by residues Gly167, 193–194 (AG), and 215–216 (NS).

It belongs to the ThiG family. Homotetramer. Forms heterodimers with either ThiH or ThiS.

The protein resides in the cytoplasm. It carries out the reaction [ThiS sulfur-carrier protein]-C-terminal-Gly-aminoethanethioate + 2-iminoacetate + 1-deoxy-D-xylulose 5-phosphate = [ThiS sulfur-carrier protein]-C-terminal Gly-Gly + 2-[(2R,5Z)-2-carboxy-4-methylthiazol-5(2H)-ylidene]ethyl phosphate + 2 H2O + H(+). Its pathway is cofactor biosynthesis; thiamine diphosphate biosynthesis. Its function is as follows. Catalyzes the rearrangement of 1-deoxy-D-xylulose 5-phosphate (DXP) to produce the thiazole phosphate moiety of thiamine. Sulfur is provided by the thiocarboxylate moiety of the carrier protein ThiS. In vitro, sulfur can be provided by H(2)S. In Prochlorococcus marinus subsp. pastoris (strain CCMP1986 / NIES-2087 / MED4), this protein is Thiazole synthase.